We begin with the raw amino-acid sequence, 94 residues long: C-C motif chemokine 26 (94 aa).

A signal peptide spans 1–23; it reads MMGLSLASAVLLASLLSLHLGTA. Disulfide bonds link cysteine 33–cysteine 57 and cysteine 34–cysteine 73.

This sequence belongs to the intercrine beta (chemokine CC) family. As to quaternary structure, monomer. Ubiquitously expressed at low levels in various tissues including heart and ovary.

Its subcellular location is the secreted. In terms of biological role, chemoattractant for eosinophils and basophils. Acts as a ligand for C-C chemokine receptor CCR3 which triggers Ca(2+) mobilization in eosinophils. Also acts as a ligand for CX3C chemokine receptor CX3CR1, inducing cell chemotaxis. In Homo sapiens (Human), this protein is C-C motif chemokine 26.